Consider the following 312-residue polypeptide: Pyridoxal kinase (312 aa).

Met-1 is modified (N-acetylmethionine). Residues Ser-12 and Thr-47 each coordinate pyridoxal 5'-phosphate. Positions 12 and 47 each coordinate pyridoxamine. The residue at position 59 (Ser-59) is a Phosphoserine. Residue Asp-113 coordinates K(+). A pyridoxal 5'-phosphate-binding site is contributed by Tyr-127. Position 148 (Thr-148) interacts with K(+). Asn-150 lines the ADP pocket. Asn-150 is an ATP binding site. Ser-164 is subject to Phosphoserine. Thr-186 serves as a coordination point for K(+). 186-187 lines the ADP pocket; sequence TS. 186–187 is a binding site for ATP; that stretch reads TS. Residue Ser-213 is modified to Phosphoserine. ADP-binding positions include 223–226 and 233–234; these read MHKV and TG. Residues 223 to 226 and 233 to 234 contribute to the ATP site; these read MHKV and TG. 232–235 lines the pyridoxal 5'-phosphate pocket; the sequence is GTGD. Asp-235 serves as a coordination point for pyridoxamine. The active-site Proton acceptor is the Asp-235. Residue Ser-285 is modified to Phosphoserine.

It belongs to the pyridoxine kinase family. In terms of assembly, homodimer. The cofactor is Zn(2+). It depends on Mg(2+) as a cofactor. Ubiquitous.

It localises to the cytoplasm. It is found in the cytosol. It catalyses the reaction pyridoxal + ATP = pyridoxal 5'-phosphate + ADP + H(+). It carries out the reaction pyridoxamine + ATP = pyridoxamine 5'-phosphate + ADP + H(+). The enzyme catalyses pyridoxine + ATP = pyridoxine 5'-phosphate + ADP + H(+). The protein operates within cofactor metabolism; pyridoxal 5'-phosphate salvage; pyridoxal 5'-phosphate from pyridoxal: step 1/1. It functions in the pathway cofactor metabolism; pyridoxal 5'-phosphate salvage; pyridoxine 5'-phosphate from pyridoxine: step 1/1. Its pathway is cofactor metabolism; pyridoxal 5'-phosphate salvage; pyridoxamine 5'-phosphate from pyridoxamine: step 1/1. Its activity is regulated as follows. Activated by K(+). Activity is increased in the presence of Na(+). Its function is as follows. Catalyzes the phosphorylation of the dietary vitamin B6 vitamers pyridoxal (PL), pyridoxine (PN) and pyridoxamine (PM) to form pyridoxal 5'-phosphate (PLP), pyridoxine 5'-phosphate (PNP) and pyridoxamine 5'-phosphate (PMP), respectively. PLP is the active form of vitamin B6, and acts as a cofactor for over 140 different enzymatic reactions. This Ovis aries (Sheep) protein is Pyridoxal kinase (PDXK).